The chain runs to 67 residues: Large ribosomal subunit protein uL29 (67 aa).

It belongs to the universal ribosomal protein uL29 family.

The polypeptide is Large ribosomal subunit protein uL29 (Zymomonas mobilis subsp. mobilis (strain ATCC 31821 / ZM4 / CP4)).